Here is a 267-residue protein sequence, read N- to C-terminus: Undecaprenyl-diphosphatase (267 aa).

The next 8 membrane-spanning stretches (helical) occupy residues 1–21 (MSYFEAFILALIQGLTEFLPI), 39–59 (QGLAFDVAVHVGTLMAVVIYF), 83–103 (AKLAWMIVIATIPACVFGLLM), 111–131 (LRSAYVIATTTIVFGLLLWWV), 144–164 (TGWKKAVFIGIAQALAMIPGT), 189–209 (FLMSIPIITLAGSYLGMKLVT), 218–238 (FLLTGILTSFISAYICIHFFL), and 245–265 (GMTPFVIYRLILGVGLFAFLL).

This sequence belongs to the UppP family.

The protein resides in the cell inner membrane. The enzyme catalyses di-trans,octa-cis-undecaprenyl diphosphate + H2O = di-trans,octa-cis-undecaprenyl phosphate + phosphate + H(+). Functionally, catalyzes the dephosphorylation of undecaprenyl diphosphate (UPP). Confers resistance to bacitracin. This chain is Undecaprenyl-diphosphatase, found in Vibrio parahaemolyticus serotype O3:K6 (strain RIMD 2210633).